The following is a 681-amino-acid chain: Pentatricopeptide repeat-containing protein At2g22410, mitochondrial (681 aa).

The transit peptide at 1-32 (MNISKAKLLLLPPPLTPKLNRSLYSHSQRRTR) directs the protein to the mitochondrion. PPR repeat units lie at residues 117–151 (NIFSWNVTIRGFSESENPKESFLLYKQMLRHGCCE), 155–189 (DHFTYPVLFKVCADLRLSSLGHMILGHVLKLRLEL), 190–220 (VSHVHNASIHMFASCGDMENARKVFDESPVR), 221–255 (DLVSWNCLINGYKKIGEAEKAIYVYKLMESEGVKP), 256–290 (DDVTMIGLVSSCSMLGDLNRGKEFYEYVKENGLRM), 291–321 (TIPLVNALMDMFSKCGDIHEARRIFDNLEKR), 322–356 (TIVSWTTMISGYARCGLLDVSRKLFDDMEEKDVVL), 357–387 (WNAMIGGSVQAKRGQDALALFQEMQTSNTKP), 388–422 (DEITMIHCLSACSQLGALDVGIWIHRYIEKYSLSL), 423–453 (NVALGTSLVDMYAKCGNISEALSVFHGIQTR), 454–488 (NSLTYTAIIGGLALHGDASTAISYFNEMIDAGIAP), 489–519 (DEITFIGLLSACCHGGMIQTGRDYFSQMKSR), and 525–555 (QLKHYSIMVDLLGRAGLLEEADRLMESMPME). Residues 560 to 635 (VWGALLFGCR…IPGCSSIEVN (76 aa)) form a type E motif region. The tract at residues 636–666 (GIVCEFIVRDKSRPESEKIYDRLHCLGRHMR) is type E(+) motif.

Belongs to the PPR family. PCMP-E subfamily.

The protein resides in the mitochondrion. The polypeptide is Pentatricopeptide repeat-containing protein At2g22410, mitochondrial (PCMP-E28) (Arabidopsis thaliana (Mouse-ear cress)).